Consider the following 324-residue polypeptide: Beta-ketoacyl-[acyl-carrier-protein] synthase III (324 aa).

Active-site residues include cysteine 114 and histidine 246. Residues 247 to 251 (QANLR) are ACP-binding. Residue asparagine 276 is part of the active site.

Belongs to the thiolase-like superfamily. FabH family. As to quaternary structure, homodimer.

The protein resides in the cytoplasm. It carries out the reaction malonyl-[ACP] + acetyl-CoA + H(+) = 3-oxobutanoyl-[ACP] + CO2 + CoA. It functions in the pathway lipid metabolism; fatty acid biosynthesis. Functionally, catalyzes the condensation reaction of fatty acid synthesis by the addition to an acyl acceptor of two carbons from malonyl-ACP. Catalyzes the first condensation reaction which initiates fatty acid synthesis and may therefore play a role in governing the total rate of fatty acid production. Possesses both acetoacetyl-ACP synthase and acetyl transacylase activities. Its substrate specificity determines the biosynthesis of branched-chain and/or straight-chain of fatty acids. The polypeptide is Beta-ketoacyl-[acyl-carrier-protein] synthase III (Campylobacter jejuni subsp. jejuni serotype O:2 (strain ATCC 700819 / NCTC 11168)).